Here is a 930-residue protein sequence, read N- to C-terminus: Translation initiation factor IF-2 (930 aa).

Positions 50–67 are enriched in low complexity; it reads FKPAAAPKVEAKPAAPKV. Disordered stretches follow at residues 50-217 and 260-346; these read FKPA…SSEE and EVVP…HELP. 2 stretches are compositionally biased toward basic and acidic residues: residues 68–90 and 110–125; these read SAEK…EAKP and FKAE…AERR. A compositionally biased stretch (low complexity) spans 129–141; sequence KGNNRDQQQNGNR. Composition is skewed to basic and acidic residues over residues 157-167 and 262-295; these read RDNRRFNDQAK and VPEK…DGPR. The segment covering 309–318 has biased composition (low complexity); the sequence is NQKNSNWNNN. Residues 337 to 346 are compositionally biased toward basic and acidic residues; the sequence is VTERKFHELP. Positions 432 to 599 constitute a tr-type G domain; the sequence is ERPPVVTIMG…TVLLVAEIQE (168 aa). The segment at 441–448 is G1; that stretch reads GHVDHGKT. 441–448 is a binding site for GTP; it reads GHVDHGKT. The G2 stretch occupies residues 466-470; it reads GITQH. The interval 487-490 is G3; sequence DTPG. GTP is bound by residues 487-491 and 541-544; these read DTPGH and NKID. Positions 541–544 are G4; the sequence is NKID. The tract at residues 577–579 is G5; it reads SAK.

The protein belongs to the TRAFAC class translation factor GTPase superfamily. Classic translation factor GTPase family. IF-2 subfamily.

The protein localises to the cytoplasm. In terms of biological role, one of the essential components for the initiation of protein synthesis. Protects formylmethionyl-tRNA from spontaneous hydrolysis and promotes its binding to the 30S ribosomal subunits. Also involved in the hydrolysis of GTP during the formation of the 70S ribosomal complex. This is Translation initiation factor IF-2 from Streptococcus pneumoniae (strain CGSP14).